A 766-amino-acid polypeptide reads, in one-letter code: Pyrophosphate-energized vacuolar membrane proton pump (766 aa).

Residues 2 to 8 (GAAILPD) lie on the Intravacuolar side of the membrane. A helical membrane pass occupies residues 9–35 (LGTEILIPVCAVIGIAFALFQWLLVSK). Residues 36–84 (VKLSAVRDASPNAAAKNGYNDYLIEEEEGINDHNVVVKCAEIQNAISEG) are Cytoplasmic-facing. A helical transmembrane segment spans residues 85–114 (ATSFLFTEYKYVGIFMVAFAILIFLFLGSV). Over 115 to 135 (EGFSTSPQACSYDKTKTCKPA) the chain is Intravacuolar. Cysteine 124 and cysteine 132 form a disulfide bridge. Residues 136 to 163 (LATAIFSTVSFLLGGVTSLVSGFLGMKI) traverse the membrane as a helical segment. At 164 to 186 (ATYANARTTLEARKGVGKAFITA) the chain is on the cytoplasmic side. A helical membrane pass occupies residues 187 to 216 (FRSGAVMGFLLAANGLLVLYIAINLFKIYY). Residues 217–219 (GDD) lie on the Intravacuolar side of the membrane. Residues 220–248 (WGGLFEAITGYGLGGSSMALFGRVGGGIY) form a helical membrane-spanning segment. Over 249-286 (TKAADVGADLVGKVERNIPEDDPRNPAVIADNVGDNVG) the chain is Cytoplasmic. Residue lysine 250 coordinates substrate. Aspartate 253, aspartate 257, and aspartate 283 together coordinate Mg(2+). Residues 287–312 (DIAGMGSDLFGSYAESSCAALVVASI) traverse the membrane as a helical segment. Topologically, residues 313–320 (SSFGLNHE) are intravacuolar. The helical transmembrane segment at 321–346 (LTAMLYPLIVSSVGILVCLLTTLFAT) threads the bilayer. Residues 347 to 354 (DFFEIKAV) are Cytoplasmic-facing. The helical transmembrane segment at 355–382 (KEIEPALKKQLVISTVLMTIGVAVVSFV) threads the bilayer. Residues 383 to 401 (ALPTSFTIFNFGVQKDVKS) are Intravacuolar-facing. A helical membrane pass occupies residues 402–425 (WQLFLCVAVGLWAGLIIGFVTEYY). Over 426-447 (TSNAYSPVQDVADSCRTGAATN) the chain is Cytoplasmic. The chain crosses the membrane as a helical span at residues 448–472 (VIFGLALGYKSVIIPIFAIAISIFV). The Intravacuolar segment spans residues 473–478 (SFTFAA). The chain crosses the membrane as a helical span at residues 479-505 (MYGIAVAALGMLSTIATGLAIDAYGPI). The Cytoplasmic segment spans residues 506-534 (SDNAGGIAEMAGMSHRIRERTDALDAAGN). Residues aspartate 507 and asparagine 534 each coordinate Mg(2+). A helical membrane pass occupies residues 535–563 (TTAAIGKGFAIGSAALVSLALFGAFVSRA). Residues 564–573 (SITTVDVLTP) are Intravacuolar-facing. The chain crosses the membrane as a helical span at residues 574–602 (KVFIGLIVGAMLPYWFSAMTMKSVGSAAL). Topologically, residues 603–631 (KMVEEVRRQFNTIPGLMEGTAKPDYATCV) are cytoplasmic. Residues 632–660 (KISTDASIKEMIPPGALVMLTPLVVGILF) traverse the membrane as a helical segment. Residue glycine 661 is a topological domain, intravacuolar. The chain crosses the membrane as a helical span at residues 662–689 (VETLSGVLAGSLVSGVQIAISASNTGGA). Over 690–732 (WDNAKKYIEAGASEHARSLGPKGSDCHKAAVIGDTIGDPLKDT) the chain is Cytoplasmic. Mg(2+) is bound by residues aspartate 691 and aspartate 727. Residue lysine 730 participates in substrate binding. The chain crosses the membrane as a helical span at residues 733–758 (SGPSLNILIKLMAVESLVFAPFFATH). The Intravacuolar segment spans residues 759 to 765 (GGLLFKI).

Belongs to the H(+)-translocating pyrophosphatase (TC 3.A.10) family. K(+)-stimulated subfamily. Homodimer.

The protein localises to the vacuole membrane. It catalyses the reaction diphosphate + H2O + H(+)(in) = 2 phosphate + 2 H(+)(out). Inhibited by excess pyrophosphate as well as excess Mg(2+). Inhibition by ATP, GTP, and CTP is reversed by increasing the Mg(2+) concentration. This suggests that the substrate is a particular metal complex such as MgPPi(2-). Modification of Asp-283 with DCCD abolishes pyrophosphatase activity. In terms of biological role, proton-translocating inorganic pyrophosphatase that contributes to the transtonoplast (from cytosol to vacuole lumen) H(+)-electrochemical potential difference. It establishes a proton gradient of similar and often greater magnitude than the H(+)-ATPase on the same membrane. The protein is Pyrophosphate-energized vacuolar membrane proton pump of Vigna radiata var. radiata (Mung bean).